The primary structure comprises 194 residues: Peptidyl-tRNA hydrolase (194 aa).

Tyr17 serves as a coordination point for tRNA. Residue His22 is the Proton acceptor of the active site. TRNA-binding residues include Phe68, Asn70, and Asn116.

It belongs to the PTH family. In terms of assembly, monomer.

The protein resides in the cytoplasm. It carries out the reaction an N-acyl-L-alpha-aminoacyl-tRNA + H2O = an N-acyl-L-amino acid + a tRNA + H(+). In terms of biological role, hydrolyzes ribosome-free peptidyl-tRNAs (with 1 or more amino acids incorporated), which drop off the ribosome during protein synthesis, or as a result of ribosome stalling. Its function is as follows. Catalyzes the release of premature peptidyl moieties from peptidyl-tRNA molecules trapped in stalled 50S ribosomal subunits, and thus maintains levels of free tRNAs and 50S ribosomes. The sequence is that of Peptidyl-tRNA hydrolase from Histophilus somni (strain 2336) (Haemophilus somnus).